A 143-amino-acid polypeptide reads, in one-letter code: Large ribosomal subunit protein uL11 (143 aa).

It belongs to the universal ribosomal protein uL11 family. Part of the ribosomal stalk of the 50S ribosomal subunit. Interacts with L10 and the large rRNA to form the base of the stalk. L10 forms an elongated spine to which L12 dimers bind in a sequential fashion forming a multimeric L10(L12)X complex. Post-translationally, one or more lysine residues are methylated.

Forms part of the ribosomal stalk which helps the ribosome interact with GTP-bound translation factors. This chain is Large ribosomal subunit protein uL11, found in Rhizobium johnstonii (strain DSM 114642 / LMG 32736 / 3841) (Rhizobium leguminosarum bv. viciae).